The chain runs to 527 residues: Eukaryotic translation initiation factor 2 subunit gamma (527 aa).

Positions 1–83 (MSDLQDQEPS…GLPEQPLNPD (83 aa)) are disordered. Threonine 60 carries the phosphothreonine modification. The tr-type G domain maps to 98–307 (QATINIGTIG…IVKTIPVPPR (210 aa)). Positions 107–114 (GHVAHGKS) are G1. 110–115 (AHGKST) is a binding site for GTP. Residues 135–139 (NITIK) form a G2 region. The G3 stretch occupies residues 193–196 (DCPG). 249–252 (NKVD) is a GTP binding site. The interval 249–252 (NKVD) is G4. Serine 258 is subject to Phosphoserine. 284 to 286 (SAQ) is a binding site for GTP. A G5 region spans residues 284 to 286 (SAQ). The interacts with CDC123 stretch occupies residues 515 to 527 (ATIKKGTTLEPIA).

The protein belongs to the TRAFAC class translation factor GTPase superfamily. Classic translation factor GTPase family. EIF2G subfamily. As to quaternary structure, eukaryotic translation initiation factor 2 eIF2 is a heterotrimeric complex composed of an alpha, a beta and a gamma subunit. The factors eIF-1, eIF-1A, eIF-2, eIF-3, TIF5/eIF-5 and methionyl-tRNAi form a multifactor complex (MFC) that may bind to the 40S ribosome. Interacts (via C-terminus) with CDC123; the interaction is direct. Interacts with GCD1. Interacts with the eIF2B complex subunits GCD6 and GCD7. Interacts with methionyl-initiator methionine tRNA.

The protein localises to the cytoplasm. It localises to the cytosol. The enzyme catalyses GTP + H2O = GDP + phosphate + H(+). Functionally, as a subunit of eukaryotic initiation factor 2 eIF2, involved in the early steps of protein synthesis. In the presence of GTP, eIF-2 forms a ternary complex with initiator tRNA Met-tRNAi and then recruits the 40S ribosomal complex and initiation factors eIF-1, eIF-1A and eIF-3 to form the 43S pre-initiation complex (43S PIC), a step that determines the rate of protein translation. The 43S PIC binds to mRNA and scans downstream to the initiation codon, where it forms a 48S initiation complex by codon-anticodon base pairing. This leads to the displacement of eIF-1 to allow GTPase-activating protein (GAP) eIF-5-mediated hydrolysis of eIF2-bound GTP. Hydrolysis of GTP and release of Pi, which makes GTP hydrolysis irreversible, causes the release of the eIF-2-GDP binary complex from the 40S subunit, an event that is essential for the subsequent joining of the 60S ribosomal subunit to form an elongation-competent 80S ribosome. In order for eIF-2 to recycle and catalyze another round of initiation, the GDP bound to eIF-2 must be exchanged with GTP by way of a reaction catalyzed by GDP-GTP exchange factor (GEF) eIF-2B. The sequence is that of Eukaryotic translation initiation factor 2 subunit gamma (GCD11) from Saccharomyces cerevisiae (strain ATCC 204508 / S288c) (Baker's yeast).